Here is a 284-residue protein sequence, read N- to C-terminus: Bifunctional protein FolD (284 aa).

NADP(+) is bound by residues 165–167 (GRS), Ser190, and Ile231.

This sequence belongs to the tetrahydrofolate dehydrogenase/cyclohydrolase family. As to quaternary structure, homodimer.

The enzyme catalyses (6R)-5,10-methylene-5,6,7,8-tetrahydrofolate + NADP(+) = (6R)-5,10-methenyltetrahydrofolate + NADPH. It catalyses the reaction (6R)-5,10-methenyltetrahydrofolate + H2O = (6R)-10-formyltetrahydrofolate + H(+). It functions in the pathway one-carbon metabolism; tetrahydrofolate interconversion. In terms of biological role, catalyzes the oxidation of 5,10-methylenetetrahydrofolate to 5,10-methenyltetrahydrofolate and then the hydrolysis of 5,10-methenyltetrahydrofolate to 10-formyltetrahydrofolate. This is Bifunctional protein FolD from Streptococcus thermophilus (strain CNRZ 1066).